The chain runs to 536 residues: Xylulose kinase (536 aa).

Histidine 99, arginine 170, aspartate 280, and asparagine 281 together coordinate substrate. ATP is bound by residues tryptophan 355, 441–442, and asparagine 445; that span reads GA.

It belongs to the FGGY kinase family. Monomer.

It carries out the reaction D-xylulose + ATP = D-xylulose 5-phosphate + ADP + H(+). In terms of biological role, phosphorylates D-xylulose to produce D-xylulose 5-phosphate, a molecule that may play an important role in the regulation of glucose metabolism and lipogenesis. The sequence is that of Xylulose kinase (XYLB) from Homo sapiens (Human).